Here is a 606-residue protein sequence, read N- to C-terminus: Flagellar WD repeat-containing protein Pf20 (606 aa).

Residues 229–250 (PLPGAERSLGGQSTAAAGGGAS) are disordered. WD repeat units follow at residues 324 to 354 (GHLL…KMWH), 366 to 396 (GHKD…KIWD), 408 to 438 (DHKQ…RLWD), 450 to 480 (GHVD…SVWD), 492 to 522 (GHQN…KLWD), 534 to 564 (TGKH…KAYS), and 576 to 606 (GHED…RLWS).

As to quaternary structure, inter-microtubule bridges in flagella.

The protein resides in the cell projection. Its subcellular location is the cilium. It localises to the flagellum. This chain is Flagellar WD repeat-containing protein Pf20 (PF20), found in Chlamydomonas reinhardtii (Chlamydomonas smithii).